The following is a 308-amino-acid chain: Eukaryotic translation initiation factor 3 subunit G-B (308 aa).

2 disordered regions span residues 1–35 and 176–227; these read MPTG…KQDP and STAD…DDNA. Residues 185 to 194 are compositionally biased toward low complexity; it reads GAEPEPAQAP. A compositionally biased stretch (basic and acidic residues) spans 209 to 227; it reads GGSRRGESMQPNRRADDNA. An RRM domain is found at 227–305; sequence ATIRVTNLSE…LILNVEWAKP (79 aa).

This sequence belongs to the eIF-3 subunit G family. In terms of assembly, component of the eukaryotic translation initiation factor 3 (eIF-3) complex, which is composed of 13 subunits: eif3a, eif3b, eif3c, eif3d, eif3e, eif3f, eif3g, eif3h, eif3i, eif3j, eif3k, eif3l and eif3m.

Its subcellular location is the cytoplasm. Its function is as follows. RNA-binding component of the eukaryotic translation initiation factor 3 (eIF-3) complex, which is involved in protein synthesis of a specialized repertoire of mRNAs and, together with other initiation factors, stimulates binding of mRNA and methionyl-tRNAi to the 40S ribosome. The eIF-3 complex specifically targets and initiates translation of a subset of mRNAs involved in cell proliferation. This subunit can bind 18S rRNA. This Xenopus laevis (African clawed frog) protein is Eukaryotic translation initiation factor 3 subunit G-B (eif3g-b).